We begin with the raw amino-acid sequence, 241 residues long: Xyloglucan-specific endo-beta-1,4-glucanase A (241 aa).

Residues 1 to 16 (MKVLALSALLSLASAA) form the signal peptide. Residue Asn-47 is glycosylated (N-linked (GlcNAc...) asparagine).

Belongs to the glycosyl hydrolase 12 (cellulase H) family.

The protein localises to the secreted. It catalyses the reaction xyloglucan + H2O = xyloglucan oligosaccharides.. Its function is as follows. Catalyzes endohydrolysis of 1,4-beta-D-glucosidic linkages in xyloglucan with retention of the beta-configuration of the glycosyl residues. Specific for xyloglucan and does not hydrolyze other cell wall components. The sequence is that of Xyloglucan-specific endo-beta-1,4-glucanase A (xgeA) from Aspergillus niger.